The primary structure comprises 439 residues: 26S proteasome regulatory subunit 6A (439 aa).

N-acetylmethionine is present on Met-1. A Phosphoserine modification is found at Ser-9. 227–234 (GPPGTGKT) contacts ATP. At Ser-376 the chain carries Phosphoserine.

Belongs to the AAA ATPase family. As to quaternary structure, component of the 19S proteasome regulatory particle complex. The 26S proteasome consists of a 20S core particle (CP) and two 19S regulatory subunits (RP). The regulatory particle is made of a lid composed of 9 subunits, a base containing 6 ATPases including PSMC3 and few additional components. Interacts with PAAF1. In terms of assembly, (Microbial infection) Interacts with HIV-1 Tat. Sumoylated by UBE2I in response to MEKK1-mediated stimuli.

The protein resides in the cytoplasm. The protein localises to the nucleus. Component of the 26S proteasome, a multiprotein complex involved in the ATP-dependent degradation of ubiquitinated proteins. This complex plays a key role in the maintenance of protein homeostasis by removing misfolded or damaged proteins, which could impair cellular functions, and by removing proteins whose functions are no longer required. Therefore, the proteasome participates in numerous cellular processes, including cell cycle progression, apoptosis, or DNA damage repair. PSMC3 belongs to the heterohexameric ring of AAA (ATPases associated with diverse cellular activities) proteins that unfolds ubiquitinated target proteins that are concurrently translocated into a proteolytic chamber and degraded into peptides. This Homo sapiens (Human) protein is 26S proteasome regulatory subunit 6A (PSMC3).